We begin with the raw amino-acid sequence, 713 residues long: Oligopeptidase PhomG (713 aa).

His-461 serves as a coordination point for Zn(2+). Residue Glu-462 is part of the active site. His-465 and His-468 together coordinate Zn(2+).

Belongs to the peptidase M3 family. As to quaternary structure, monomer. Zn(2+) is required as a cofactor.

It participates in mycotoxin biosynthesis. Its function is as follows. Oligopeptidase; part of the gene cluster that mediates the biosynthesis of the phomopsins, a group of hexapeptide mycotoxins which infects lupins and causes lupinosis disease in livestock. Within the pathway, phomG and phomG' are probably involved in the processing of the phomA and phomA' precursors. The pathway starts with the processing of the precursor phomA by several endopeptidases including kexin proteases as well as the cluster-specific S41 family peptidase phomP1 and the oligopeptidase phomG to produce 10 identical copies of the hexapeptide Tyr-Val-Ile-Pro-Ile-Asp. After being excised from the precursor peptide, the core peptides are cyclized and modified post-translationally by enzymes encoded within the gene cluster. The timing and order of proteolysis of the phomA precursor and PTMs are still unknown. Two tyrosinase-like enzymes, phomQ1 and phomQ2, catalyze the chlorination and hydroxylation of Tyr, respectively. PhomYb, is proposed to be involved in the construction of the macrocyclic structure. The other 4 ustYa family proteins may be involved in PTMs that generate the unique structure of phomopsin A. PhomYa is required for the hydroxylation of C-beta of Tyr. PhomYc, phomYd, and phomYe are responsible for the biosynthesis of 2,3-dehydroisoleucine (dIle), 2,3-dehydroaspartic acid (dAsp), and 3,4-dehydroproline (dPro), respectively. While dIle formation by phomYc is indispensable for the installation of dAsp by phomYd, the order of the other PTMs have not been elucidated yet. Most of the biosynthetic enzymes likely have broad substrate specificity, and thus, there might be a metabolic grid from a precursor to phomopsin A. The enzyme(s) responsible for the biosynthesis of 3,4-dehydrovaline (dVal) have also not been identified yet. Finally, phomM acts as an S-adenosylmethionine-dependent alpha-N-methyltransferase that catalyzes two successive N-methylation reactions, converting N-desmethyl-phomopsin A to phomopsin A and phomopsin A further to an N,N-dimethylated congener called phomopsin E. The sequence is that of Oligopeptidase PhomG from Diaporthe leptostromiformis (Lupinosis disease fungus).